A 295-amino-acid polypeptide reads, in one-letter code: 33 kDa chaperonin (295 aa).

2 disulfides stabilise this stretch: C237-C239 and C270-C273.

It belongs to the HSP33 family. Under oxidizing conditions two disulfide bonds are formed involving the reactive cysteines. Under reducing conditions zinc is bound to the reactive cysteines and the protein is inactive.

The protein resides in the cytoplasm. Redox regulated molecular chaperone. Protects both thermally unfolding and oxidatively damaged proteins from irreversible aggregation. Plays an important role in the bacterial defense system toward oxidative stress. The chain is 33 kDa chaperonin from Geobacillus sp. (strain WCH70).